The following is a 591-amino-acid chain: Serine/threonine-protein kinase Nek2 (591 aa).

The 255-residue stretch at 4–258 folds into the Protein kinase domain; the sequence is YEVLEQIGKG…AAQLLKHPQL (255 aa). ATP-binding positions include 10 to 18 and lysine 33; that span reads IGKGAFGSA. The active-site Proton acceptor is the aspartate 129. Disordered regions lie at residues 309-331, 382-408, and 500-534; these read LGNE…SSTR, ARNQ…TTPN, and RTDG…DTSS. Polar residues-rich tracts occupy residues 391-408 and 504-534; these read TSYN…TTPN and DNGS…DTSS.

Belongs to the protein kinase superfamily. NEK Ser/Thr protein kinase family. NIMA subfamily. In terms of tissue distribution, expressed in anthers, pistils and leaves.

It catalyses the reaction L-seryl-[protein] + ATP = O-phospho-L-seryl-[protein] + ADP + H(+). The catalysed reaction is L-threonyl-[protein] + ATP = O-phospho-L-threonyl-[protein] + ADP + H(+). Its function is as follows. May be involved in plant development processes. This is Serine/threonine-protein kinase Nek2 from Oryza sativa subsp. japonica (Rice).